The primary structure comprises 65 residues: Potassium channel toxin kappa-KTx 2.7 (65 aa).

Residues methionine 1 to cysteine 26 form the signal peptide. Residues serine 27–glutamate 39 constitute a propeptide that is removed on maturation. Disulfide bonds link cysteine 45/cysteine 63 and cysteine 49/cysteine 59.

It belongs to the short scorpion toxin superfamily. Potassium channel inhibitor kappa-KTx family. Kappa-KTx 2 subfamily. In terms of tissue distribution, expressed by the venom gland.

The protein resides in the secreted. Its function is as follows. Weakly inhibits the Kv7.1/KCNQ1 channel (10 uM of the toxin inhibits currents by 17.8%). The sequence is that of Potassium channel toxin kappa-KTx 2.7 from Heterometrus petersii (Asian forest scorpion).